The following is a 686-amino-acid chain: U3 small nucleolar RNA-associated protein 4 homolog (686 aa).

WD repeat units follow at residues 14–53, 57–96, 99–138, 143–181, 193–231, 234–273, 285–322, 324–359, 435–474, 482–521, and 524–563; these read YVPS…FQEK, GHES…IKYT, AFGG…IQFA, RQKS…IIRK, KSRC…LVKS, VANA…SNSS, HHTH…EVKN, DAAL…ELWR, SFLR…FKHL, GTVE…LHCT, and AYNF…YTEW. A Glycyl lysine isopeptide (Lys-Gly) (interchain with G-Cter in SUMO2) cross-link involves residue K321.

In terms of assembly, interacts with HIVEP1 Interacts with NOL11. Part of the small subunit (SSU) processome, composed of more than 70 proteins and the RNA chaperone small nucleolar RNA (snoRNA) U3. May be a component of the proposed t-UTP subcomplex of the ribosomal small subunit (SSU) processome containing at least UTP4, WDR43, HEATR1, UTP15, WDR75. Post-translationally, may be phosphorylated during mitosis; may control the association of this protein with WRD43 and UTP15. Expressed in liver.

Its subcellular location is the nucleus. It localises to the nucleolus. It is found in the chromosome. Its function is as follows. Ribosome biogenesis factor. Involved in nucleolar processing of pre-18S ribosomal RNA. Part of the small subunit (SSU) processome, first precursor of the small eukaryotic ribosomal subunit. During the assembly of the SSU processome in the nucleolus, many ribosome biogenesis factors, an RNA chaperone and ribosomal proteins associate with the nascent pre-rRNA and work in concert to generate RNA folding, modifications, rearrangements and cleavage as well as targeted d Involved in SSU pre-rRNA processing at sites A', A0, 1 and 2b. Required for optimal pre-ribosomal RNA transcription by RNA polymerase. May be a transcriptional regulator. This is U3 small nucleolar RNA-associated protein 4 homolog (Utp4) from Mus musculus (Mouse).